The following is a 303-amino-acid chain: N-acetyl-D-glucosamine kinase (303 aa).

ATP-binding positions include 4–11 (GFDIGGTK) and 133–140 (GVGGGLIF). The Zn(2+) site is built by histidine 157, cysteine 177, cysteine 179, and cysteine 184.

The protein belongs to the ROK (NagC/XylR) family. NagK subfamily.

It catalyses the reaction N-acetyl-D-glucosamine + ATP = N-acetyl-D-glucosamine 6-phosphate + ADP + H(+). The protein operates within cell wall biogenesis; peptidoglycan recycling. In terms of biological role, catalyzes the phosphorylation of N-acetyl-D-glucosamine (GlcNAc) derived from cell-wall degradation, yielding GlcNAc-6-P. This chain is N-acetyl-D-glucosamine kinase, found in Escherichia coli O9:H4 (strain HS).